An 875-amino-acid polypeptide reads, in one-letter code: Alanine--tRNA ligase (875 aa).

The Zn(2+) site is built by H567, H571, C669, and H673.

The protein belongs to the class-II aminoacyl-tRNA synthetase family. Requires Zn(2+) as cofactor.

Its subcellular location is the cytoplasm. It carries out the reaction tRNA(Ala) + L-alanine + ATP = L-alanyl-tRNA(Ala) + AMP + diphosphate. Functionally, catalyzes the attachment of alanine to tRNA(Ala) in a two-step reaction: alanine is first activated by ATP to form Ala-AMP and then transferred to the acceptor end of tRNA(Ala). Also edits incorrectly charged Ser-tRNA(Ala) and Gly-tRNA(Ala) via its editing domain. The protein is Alanine--tRNA ligase of Geobacter sulfurreducens (strain ATCC 51573 / DSM 12127 / PCA).